Reading from the N-terminus, the 479-residue chain is MGQLISFFQDIPIFFEEALNVALAVVTLLAIIKGIVNVWKSGILQLFVFLVLAGRSCSFKVGHHTNFESFTVKLGGVFHELPSLCRVNNSYSLIRLSHNSNQALSVEYVDVHPVLCSSSPTILDNYTQCIKGSPEFDWILGWTIKGLGHDFLRDPRICCEPKKTTNAEFTFQLNLTDSPETHHYRSKIEVGIRHLFGNYITNDSYSKMSVVMRNTTWEGQCSNSHVNTLRFLVKNAGYLVGRKPLAFFSWSLSDPKGNDMPGGYCLERWMLVAGDLKCFGNTAVAKCNLNHDSEFCDMLRLFDFNKNAIEKLNNQTKTAVNMLTHSINSLISDNLLMRNKLKEILKVPYCNYTRFWYINHTKSGEHSLPRCWLVSNGSYLNESDFRNEWILESDHLIAEMLSKEYQDRQGKTPLTLVDLCFWSAIFFTTSLFLHLVGFPTHRHIQGDPCPLPHRLDRNGACRCGRFQKLGKQVTWKRKH.

Gly-2 carries N-myristoyl glycine; by host lipidation. Residues Gly-2–Glu-17 lie on the Extracellular side of the membrane. Residues Ala-18–Ile-32 traverse the membrane as a helical segment. A topological domain (cytoplasmic) is located at residue Lys-33. Residues Gly-34–Ala-53 traverse the membrane as a helical segment. Extracellular segments lie at residues Gly-54–Ser-58 and Phe-59–Asp-418. Cys-57 lines the Zn(2+) pocket. 3 disulfide bridges follow: Cys-85-Cys-221, Cys-265-Cys-278, and Cys-287-Cys-296. N-linked (GlcNAc...) asparagine; by host glycosylation is found at Asn-88, Asn-125, Asn-174, Asn-202, and Asn-214. N-linked (GlcNAc...) asparagine; by host glycans are attached at residues Asn-314, Asn-351, Asn-359, Asn-376, and Asn-381. A disulfide bridge links Cys-350 with Cys-371. Residues Leu-419–Pro-439 traverse the membrane as a helical segment. Residues Thr-440–His-479 lie on the Cytoplasmic side of the membrane. Residues His-441, His-443, Cys-449, His-453, Cys-461, Cys-463, and His-479 each contribute to the Zn(2+) site.

It belongs to the arenaviridae GPC protein family. In terms of assembly, homotetramer; disulfide-linked. Homotetramer. GP2 homotetramers bind through ionic interactions with GP1 homotetramers to form the GP complex together with the stable signal peptide. The GP-C polyprotein interacts with the host protease MBTPS1/SKI-1 resulting in the polyprotein processing. In terms of processing, specific enzymatic cleavages in vivo yield mature proteins. GP-C polyprotein is cleaved in the endoplasmic reticulum by the host protease MBTPS1. Only cleaved glycoprotein is incorporated into virions. Post-translationally, the SSP remains stably associated with the GP complex following cleavage by signal peptidase and plays crucial roles in the trafficking of GP through the secretory pathway. Myristoylation is necessary for GP2-mediated fusion activity.

It is found in the virion membrane. The protein localises to the host endoplasmic reticulum membrane. The protein resides in the host Golgi apparatus membrane. It localises to the host cell membrane. Its function is as follows. Interacts with the host receptor. Mediates virus attachment to host TFRC. This attachment induces virion internalization predominantly through clathrin-mediated endocytosis. Functionally, class I viral fusion protein that directs fusion of viral and host endosomal membranes, leading to delivery of the nucleocapsid into the cytoplasm. Membrane fusion is mediated by irreversible conformational changes induced upon acidification in the endosome. In terms of biological role, stable signal peptide (SSP): cleaved and functions as a signal peptide. In addition, it is also retained as the third component of the GP complex. The SSP is required for efficient glycoprotein expression, post-translational maturation cleavage of GP1 and GP2, glycoprotein transport to the cell surface plasma membrane, formation of infectious virus particles, and acid pH-dependent glycoprotein-mediated cell fusion. The polypeptide is Pre-glycoprotein polyprotein GP complex (Homo sapiens (Human)).